The sequence spans 968 residues: RNA polymerase-associated protein RapA (968 aa).

Residues 164-334 (DVGRRHAPRV…FARLRLLDPN (171 aa)) form the Helicase ATP-binding domain. Residue 177–184 (DEVGLGKT) participates in ATP binding. The DEAH box signature appears at 280-283 (DEAH). The Helicase C-terminal domain maps to 490–644 (RVEWLMGYLT…TCPTGRTVYD (155 aa)).

The protein belongs to the SNF2/RAD54 helicase family. RapA subfamily. Interacts with the RNAP. Has a higher affinity for the core RNAP than for the holoenzyme. Its ATPase activity is stimulated by binding to RNAP.

Its function is as follows. Transcription regulator that activates transcription by stimulating RNA polymerase (RNAP) recycling in case of stress conditions such as supercoiled DNA or high salt concentrations. Probably acts by releasing the RNAP, when it is trapped or immobilized on tightly supercoiled DNA. Does not activate transcription on linear DNA. Probably not involved in DNA repair. This Klebsiella pneumoniae (strain 342) protein is RNA polymerase-associated protein RapA.